The primary structure comprises 309 residues: Homoserine O-succinyltransferase (309 aa).

Residue cysteine 142 is the Acyl-thioester intermediate of the active site. The substrate site is built by lysine 163 and serine 192. The Proton acceptor role is filled by histidine 235. Glutamate 237 is an active-site residue. Residue arginine 249 coordinates substrate.

Belongs to the MetA family.

The protein resides in the cytoplasm. It catalyses the reaction L-homoserine + succinyl-CoA = O-succinyl-L-homoserine + CoA. The protein operates within amino-acid biosynthesis; L-methionine biosynthesis via de novo pathway; O-succinyl-L-homoserine from L-homoserine: step 1/1. Its function is as follows. Transfers a succinyl group from succinyl-CoA to L-homoserine, forming succinyl-L-homoserine. In Klebsiella pneumoniae (strain 342), this protein is Homoserine O-succinyltransferase.